We begin with the raw amino-acid sequence, 194 residues long: Putative adenylate kinase (194 aa).

5 residues coordinate ATP: G16, G18, K19, T20, and T21. The interval 36-59 is NMP; the sequence is SVGELLAGTPYVTYIPELDTYEIV. The segment at 108 to 118 is LID; it reads RRGWPLKKILD. R109 is a binding site for ATP.

The protein belongs to the adenylate kinase family. AK6 subfamily. In terms of assembly, interacts with uS11. Not a structural component of 40S pre-ribosomes, but transiently interacts with them by binding to uS11.

The enzyme catalyses AMP + ATP = 2 ADP. It catalyses the reaction ATP + H2O = ADP + phosphate + H(+). In terms of biological role, broad-specificity nucleoside monophosphate (NMP) kinase that catalyzes the reversible transfer of the terminal phosphate group between nucleoside triphosphates and monophosphates. Also has ATPase activity. Involved in the late maturation steps of the 30S ribosomal particles, specifically 16S rRNA maturation. While NMP activity is not required for ribosome maturation, ATPase activity is. Associates transiently with small ribosomal subunit protein uS11. ATP hydrolysis breaks the interaction with uS11. May temporarily remove uS11 from the ribosome to enable a conformational change of the ribosomal RNA that is needed for the final maturation step of the small ribosomal subunit. In Pyrobaculum aerophilum (strain ATCC 51768 / DSM 7523 / JCM 9630 / CIP 104966 / NBRC 100827 / IM2), this protein is Putative adenylate kinase.